Here is a 554-residue protein sequence, read N- to C-terminus: Perforin-1 (554 aa).

The signal sequence occupies residues 1-20; sequence MAAYLFLLGLFLLLPRPVPA. 3 disulfide bridges follow: Cys-22-Cys-75, Cys-30-Cys-72, and Cys-101-Cys-175. The 349-residue stretch at 26 to 374 folds into the MACPF domain; sequence TRSECKQNHK…HYVMSRARWR (349 aa). The beta stranded transmembrane segment at 128–148 threads the bilayer; sequence WRAGLDVNPKPEANVHVSVAG. An N-linked (GlcNAc...) asparagine glycan is attached at Asn-204. 4 cysteine pairs are disulfide-bonded: Cys-241/Cys-407, Cys-376/Cys-392, Cys-380/Cys-394, and Cys-396/Cys-406. The beta stranded transmembrane segment at 256 to 278 threads the bilayer; sequence CLSVEAQVSIGAQASVSSEYKAC. One can recognise an EGF-like domain in the interval 375-407; it reads DCNRPCRAGQHKSSRDSCQCVCQDSNVTNQDCC. One can recognise a C2 domain in the interval 395–513; that stretch reads VCQDSNVTNQ…FHEVNCPLNH (119 aa). The N-linked (GlcNAc...) asparagine glycan is linked to Asn-400. Residues Gly-428, Asp-429, Thr-432, Asp-435, Asn-454, Asp-483, Ala-484, Asp-485, Trp-488, Asp-489, Asp-490, and Asp-491 each coordinate Ca(2+). Intrachain disulfides connect Cys-496/Cys-509 and Cys-524/Cys-533. Asn-548 carries N-linked (GlcNAc...) asparagine glycosylation.

The protein belongs to the complement C6/C7/C8/C9 family. Monomer, as soluble protein. Homooligomer; homooligomerizes to form a pore-forming ring. Requires Ca(2+) as cofactor. N-glycosylated. In terms of tissue distribution, detected in large granular lymphocytes and lymphokine-activated killer cells.

It is found in the cytolytic granule. The protein resides in the secreted. Its subcellular location is the cell membrane. The protein localises to the endosome lumen. Its function is as follows. Pore-forming protein that plays a key role in granzyme-mediated programmed cell death, and in defense against virus-infected or neoplastic cells. Can insert into the membrane of target cells in its calcium-bound form, oligomerize and form large pores. Promotes cytolysis and apoptosis of target cells by mediating the passage and uptake of cytotoxic granzymes. Facilitates the delivery of cationic cargo protein, while anionic or neural proteins are not delivered efficiently. Perforin pores allow the release of mature caspase-7 (CASP7) into the extracellular milieu. This chain is Perforin-1 (Prf1), found in Rattus norvegicus (Rat).